A 417-amino-acid polypeptide reads, in one-letter code: Probable dihydrofolate synthetase (417 aa).

34 to 37 lines the ATP pocket; the sequence is GKGS. Mg(2+)-binding residues include S58, E123, and H151. ATP is bound by residues R274 and D289.

This sequence belongs to the folylpolyglutamate synthase family.

The catalysed reaction is 7,8-dihydropteroate + L-glutamate + ATP = 7,8-dihydrofolate + ADP + phosphate + H(+). It functions in the pathway cofactor biosynthesis; tetrahydrofolylpolyglutamate biosynthesis. Functionally, glutamate-adding enzyme which catalyzes the binding of the first glutamyl side chain to dihydropteroate. Leads to the de nove synthesis of tetrahydrofolate. de novo. The polypeptide is Probable dihydrofolate synthetase (fol3) (Schizosaccharomyces pombe (strain 972 / ATCC 24843) (Fission yeast)).